Reading from the N-terminus, the 424-residue chain is Chloroquine resistance transporter (424 aa).

The Cytoplasmic portion of the chain corresponds to 1 to 58; that stretch reads MKFASKKNNQKNSSKNDERYRELDNLVQEGNGSRLGGGSCLGKCAHVFKLIFKEIKDN. Residues 59–79 traverse the membrane as a helical segment; that stretch reads IFIYILSIIYLSVCVMNKIFA. At 80 to 90 the chain is on the vacuolar side; it reads KRTLNKIGNYS. N-linked (GlcNAc...) asparagine glycosylation is present at Asn-88. Residues 91-111 traverse the membrane as a helical segment; that stretch reads FVTSETHNFICMIMFFIVYSL. The Cytoplasmic portion of the chain corresponds to 112 to 127; sequence FGNKKGNSKERHRSFN. Residues 128–148 form a helical membrane-spanning segment; it reads LQFFAISMLDACSVILAFIGL. At 149–154 the chain is on the vacuolar side; sequence TRTTGN. The chain crosses the membrane as a helical span at residues 155-175; the sequence is IQSFVLQLSIPINMFFCFLIL. The Cytoplasmic segment spans residues 176 to 178; the sequence is RYR. The chain crosses the membrane as a helical span at residues 179-199; the sequence is YHLYNYLGAVIIVVTIALVEM. Over 200 to 209 the chain is Vacuolar; that stretch reads KLSFETQEEN. A helical transmembrane segment spans residues 210-230; it reads SIIFNLVLISALIPVCFSNMT. Residues 231 to 248 lie on the Cytoplasmic side of the membrane; that stretch reads REIVFKKYKIDILRLNAM. The chain crosses the membrane as a helical span at residues 249–269; sequence VSFFQLFTSCLILPVYTLPFL. The Vacuolar portion of the chain corresponds to 270–317; the sequence is KQLHLPYNEIWTNIKNGFACLFLGRNTVVENCGLGMAKLCDDCDGAWK. 2 cysteine pairs are disulfide-bonded: Cys-289–Cys-312 and Cys-301–Cys-309. Residues 318–338 traverse the membrane as a helical segment; it reads TFALFSFFNICDNLITSYIID. The Cytoplasmic portion of the chain corresponds to 339–346; the sequence is KFSTMTYT. The chain crosses the membrane as a helical span at residues 347-367; that stretch reads IVSCIQGPAIAIAYYFKFLAG. The Vacuolar portion of the chain corresponds to 368–377; the sequence is DVVREPRLLD. A helical transmembrane segment spans residues 378-398; the sequence is FVTLFGYLFGSIIYRVGNIIL. Over 399–424 the chain is Cytoplasmic; the sequence is ERKKMRNEENEDSEGELTNVDSIITQ.

It belongs to the CRT-like transporter family. As to quaternary structure, monomer.

The protein localises to the vacuole membrane. It carries out the reaction L-arginine(in) = L-arginine(out). The catalysed reaction is L-lysine(in) = L-lysine(out). It catalyses the reaction L-histidine(out) = L-histidine(in). The enzyme catalyses histamine(out) = histamine(in). It carries out the reaction spermidine(in) = spermidine(out). The catalysed reaction is Fe(3+)(in) = Fe(3+)(out). It catalyses the reaction Fe(2+)(in) = Fe(2+)(out). Transporter activity is trans-stimulated by host-derived peptides containing 4-11 amino acids. Trans-stimulation by hemoglobin-derived peptide VDPVNF is pH-dependent and sodium-independent. Saquinavir trans-stimulates transport of hemoglobin-derived peptide VDPVNF. Protons are non-competitive inhibitors of chloroquine transport. Its function is as follows. Nutrient transporter. Substrate transport is pH-dependent. Can transport arginine, lysine, histidine, peptides, histamine and spermidine. May modulate activity of endogenous transporters. Involved in maintaining the osmotic homeostasis of the digestive vacuole. Required for the asexual intraerythrocytic proliferation of parasites. Can transport Fe(2+) and Fe(3+). The chain is Chloroquine resistance transporter from Plasmodium falciparum.